A 262-amino-acid chain; its full sequence is Hydroxyethylthiazole kinase (262 aa).

Methionine 50 serves as a coordination point for substrate. Arginine 125 and threonine 171 together coordinate ATP. Glycine 198 provides a ligand contact to substrate.

Belongs to the Thz kinase family. The cofactor is Mg(2+).

It catalyses the reaction 5-(2-hydroxyethyl)-4-methylthiazole + ATP = 4-methyl-5-(2-phosphooxyethyl)-thiazole + ADP + H(+). It functions in the pathway cofactor biosynthesis; thiamine diphosphate biosynthesis; 4-methyl-5-(2-phosphoethyl)-thiazole from 5-(2-hydroxyethyl)-4-methylthiazole: step 1/1. Catalyzes the phosphorylation of the hydroxyl group of 4-methyl-5-beta-hydroxyethylthiazole (THZ). The sequence is that of Hydroxyethylthiazole kinase from Escherichia coli (strain 55989 / EAEC).